The chain runs to 315 residues: Ferrochelatase (315 aa).

Fe cation contacts are provided by histidine 193 and glutamate 273.

This sequence belongs to the ferrochelatase family.

The protein localises to the cytoplasm. It catalyses the reaction heme b + 2 H(+) = protoporphyrin IX + Fe(2+). It participates in porphyrin-containing compound metabolism; protoheme biosynthesis; protoheme from protoporphyrin-IX: step 1/1. Functionally, catalyzes the ferrous insertion into protoporphyrin IX. This Wolbachia pipientis wMel protein is Ferrochelatase.